The primary structure comprises 2731 residues: Teneurin-1 (2731 aa).

The segment at 1 to 72 (MEQTDCKPYQ…KRKDVEKSTQ (72 aa)) is disordered. The Teneurin N-terminal domain maps to 1–318 (MEQTDCKPYQ…KPYRCCNWKC (318 aa)). Residues 1 to 324 (MEQTDCKPYQ…NWKCTALSAT (324 aa)) are Cytoplasmic-facing. Residues 44-55 (ETLHEYNQELRR) show a composition bias toward basic and acidic residues. Positions 62-65 (RKRK) match the Nuclear localization signal (NLS) motif. Serine 105 carries the phosphoserine modification. Phosphothreonine is present on threonine 109. Serine 116 carries the post-translational modification Phosphoserine. The tract at residues 175–241 (DSAQDMQSSP…PAPPTSTQDS (67 aa)) is disordered. Over residues 178–189 (QDMQSSPHNQFT) the composition is skewed to polar residues. Residues 192-201 (PLPPPPPPPH) show a composition bias toward pro residues. Over residues 214-224 (DSLQRRSMTTR) the composition is skewed to polar residues. Positions 290–297 (PPPRPLPR) match the Required for interaction with SORBS1 (Ten-1 ICD form) motif. A helical membrane pass occupies residues 325–345 (AITVTLALLLAYVIAVHLFGL). Residues 346 to 2731 (TWQLQPVGQI…FMRQSEIGRR (2386 aa)) are Extracellular-facing. Residue asparagine 432 is glycosylated (N-linked (GlcNAc...) asparagine). EGF-like domains follow at residues 527 to 558 (IMDD…PDCA), 559 to 590 (RDSC…ECDV), 591 to 623 (PEEQ…EICE), 624 to 656 (EEDC…NCET), 657 to 690 (PLPI…SDCS), 691 to 720 (TELC…GPTC), 721 to 752 (EERS…DHCT), and 760 to 795 (VRDG…TGCN). 22 disulfides stabilise this stretch: cysteine 531–cysteine 541, cysteine 535–cysteine 546, cysteine 548–cysteine 557, cysteine 566–cysteine 577, cysteine 579–cysteine 588, cysteine 595–cysteine 606, cysteine 600–cysteine 611, cysteine 613–cysteine 622, cysteine 627–cysteine 638, cysteine 632–cysteine 643, cysteine 645–cysteine 654, cysteine 665–cysteine 678, cysteine 680–cysteine 689, cysteine 694–cysteine 704, cysteine 698–cysteine 709, cysteine 711–cysteine 720, cysteine 725–cysteine 735, cysteine 729–cysteine 740, cysteine 742–cysteine 751, cysteine 764–cysteine 774, cysteine 768–cysteine 783, and cysteine 785–cysteine 794. N-linked (GlcNAc...) asparagine glycans are attached at residues asparagine 904 and asparagine 1083. 5 NHL repeats span residues 1193-1218 (LFAP…VRRI), 1298-1342 (SHCG…NAVI), 1357-1408 (LSCD…IAGR), 1420-1464 (FLVS…VTTN), and 1487-1530 (CFSG…ISKN). One copy of the YD 1 repeat lies at 1540 to 1559 (YEIASPADQELYQFTVNGTH). N-linked (GlcNAc...) asparagine glycans are attached at residues asparagine 1556 and asparagine 1573. YD repeat units lie at residues 1576-1596 (YNAE…VHIR), 1614-1638 (YWLT…ALMT), 1639-1660 (YPGN…TVYE), and 1661-1681 (YDPE…SSFH). Residues asparagine 1669, asparagine 1705, asparagine 1743, asparagine 1763, asparagine 1787, and asparagine 1848 are each glycosylated (N-linked (GlcNAc...) asparagine). 11 YD repeats span residues 1851–1870 (YSPS…EKME), 1871–1891 (YDQS…WSYT), 1892–1910 (YLEK…YIFE), 1911–1931 (YDQS…HSLQ), 1939–1955 (YRNI…FIQD), 1956–1975 (YSRD…RRVL), 1976–1995 (YKYT…TQVT), 1998–2018 (YEES…FICT), 2021–2041 (YRQT…EGLV), 2091–2111 (YDLN…FNAN), and 2119–2139 (YEIL…MGRM). A glycan (N-linked (GlcNAc...) asparagine) is linked at asparagine 2151. 5 YD repeats span residues 2159-2179 (YDAD…WRYS), 2180-2200 (YDLN…LTPL), 2202-2222 (YDLR…DEDG), 2234-2254 (YNSN…TVQY), and 2256-2276 (YDGL…LQFF). N-linked (GlcNAc...) asparagine glycosylation occurs at asparagine 2291. YD repeat units follow at residues 2302–2319 (YDLQ…GEEY) and 2320–2343 (YVAC…IKEI). A Phosphoserine modification is found at serine 2586. Asparagine 2608 carries an N-linked (GlcNAc...) asparagine glycan.

Belongs to the tenascin family. Teneurin subfamily. As to quaternary structure, homodimer; disulfide-linked. Heterodimer with either TENM2 or TENM3. May also form heterodimer with TENM4. Ten-1 ICD interacts with SORBS1 (via third SH3 domain). Interacts with MBD1 isoform 2. Ten-1 ICD interacts with HINT1. Once secreted, may also be cleaved to give rise to the TCAP-1 form. In terms of processing, derives from the plasma membrane form by proteolytic processing. Further proteolytic cleavage may generate 11.9 and 4.7 kDa bioactive peptides. Isoform 1 and isoform 2 are expressed in the brain. Isoform 2 is expressed in the granular layer of the dentate gyrus and the pyramidal layer (Py) of the CA1, CA2 and CA3 of the hippocampus (at protein level). Expressed in the cortex, thalamus, CA1, CA2, CA3, dentate gyrus and granular layer of the hippocampus. Weakly expressed in kidney, testis and lung.

The protein localises to the cell membrane. The protein resides in the cytoplasm. It localises to the secreted. Its subcellular location is the nucleus. It is found in the nucleus speckle. The protein localises to the nucleus matrix. The protein resides in the cytoskeleton. In terms of biological role, involved in neural development, regulating the establishment of proper connectivity within the nervous system. May function as a cellular signal transducer. Its function is as follows. Plays a role in the regulation of neuroplasticity in the limbic system. Mediates a rapid reorganization of actin- and tubulin-based cytoskeleton elements with an increase in dendritic arborization and spine density formation of neurons in the hippocampus and amygdala. Induces BDNF transcription inhibition in neurons. Activates the mitogen-activated protein (MAP) kinase 2 (MEK2) and extracellular signal-regulated kinase (ERK) cascade. Also acts as a bioactive neuroprotective peptide on limbic neurons of the brain and regulates stress-induced behavior: attenuates alkalosis-associated necrotic cell death and the effects of corticotropin-releasing factor (CRF) on c-fos/FOS induction and on the reinstatement of cocaine seeking. Functionally, induces gene transcription activation. The polypeptide is Teneurin-1 (Tenm1) (Mus musculus (Mouse)).